The following is a 382-amino-acid chain: Mannitol-1-phosphate 5-dehydrogenase (382 aa).

3–14 contacts NAD(+); the sequence is AVHFGAGNIGRG.

This sequence belongs to the mannitol dehydrogenase family.

The catalysed reaction is D-mannitol 1-phosphate + NAD(+) = beta-D-fructose 6-phosphate + NADH + H(+). The sequence is that of Mannitol-1-phosphate 5-dehydrogenase from Aliivibrio salmonicida (strain LFI1238) (Vibrio salmonicida (strain LFI1238)).